We begin with the raw amino-acid sequence, 111 residues long: Small ribosomal subunit protein bS16 (111 aa).

Residues 92 to 111 are disordered; it reads MDVKAKNRKARSSKQEAKEA.

Belongs to the bacterial ribosomal protein bS16 family.

This is Small ribosomal subunit protein bS16 from Rickettsia akari (strain Hartford).